We begin with the raw amino-acid sequence, 154 residues long: Large ribosomal subunit protein uL22c (154 aa).

This sequence belongs to the universal ribosomal protein uL22 family. In terms of assembly, part of the 50S ribosomal subunit.

The protein localises to the plastid. It is found in the chloroplast. Functionally, this protein binds specifically to 23S rRNA. Its function is as follows. The globular domain of the protein is located near the polypeptide exit tunnel on the outside of the subunit, while an extended beta-hairpin is found that lines the wall of the exit tunnel in the center of the 70S ribosome. The sequence is that of Large ribosomal subunit protein uL22c (rpl22) from Guizotia abyssinica (Niger).